A 370-amino-acid chain; its full sequence is DNA replication and repair protein RecF (370 aa).

30-37 (GQNGMGKT) is an ATP binding site.

Belongs to the RecF family.

Its subcellular location is the cytoplasm. Functionally, the RecF protein is involved in DNA metabolism; it is required for DNA replication and normal SOS inducibility. RecF binds preferentially to single-stranded, linear DNA. It also seems to bind ATP. The polypeptide is DNA replication and repair protein RecF (Bacteroides fragilis (strain YCH46)).